The sequence spans 647 residues: Threonine--tRNA ligase (647 aa).

Residues Met1–Thr61 form the TGS domain. Residues Asp240–Pro538 are catalytic. Residues Cys334, His385, and His515 each contribute to the Zn(2+) site.

Belongs to the class-II aminoacyl-tRNA synthetase family. In terms of assembly, homodimer. It depends on Zn(2+) as a cofactor.

It localises to the cytoplasm. It carries out the reaction tRNA(Thr) + L-threonine + ATP = L-threonyl-tRNA(Thr) + AMP + diphosphate + H(+). Functionally, catalyzes the attachment of threonine to tRNA(Thr) in a two-step reaction: L-threonine is first activated by ATP to form Thr-AMP and then transferred to the acceptor end of tRNA(Thr). Also edits incorrectly charged L-seryl-tRNA(Thr). The polypeptide is Threonine--tRNA ligase (Streptococcus pyogenes serotype M3 (strain ATCC BAA-595 / MGAS315)).